The chain runs to 95 residues: Small ribosomal subunit protein bS6 (95 aa).

This sequence belongs to the bacterial ribosomal protein bS6 family.

Binds together with bS18 to 16S ribosomal RNA. This chain is Small ribosomal subunit protein bS6, found in Exiguobacterium sibiricum (strain DSM 17290 / CCUG 55495 / CIP 109462 / JCM 13490 / 255-15).